A 985-amino-acid polypeptide reads, in one-letter code: Na(+)/H(+) antiporter (985 aa).

Residues 1–12 are Cytoplasmic-facing; it reads MAIWEQLEVSKA. The helical transmembrane segment at 13–33 threads the bilayer; it reads HVAYACVGVFSSIFSLVSLYV. Residues 34–36 are Extracellular-facing; sequence KEK. Residues 37–57 traverse the membrane as a helical segment; sequence LYIGESTVAGIFGLIVGPVCL. The Cytoplasmic portion of the chain corresponds to 58–70; sequence NWFNPLKWGNSDS. A helical membrane pass occupies residues 71–91; sequence ITLEITRIVLCLQIFAVAVEL. Residues 92–105 are Extracellular-facing; the sequence is PRKYMLKHWVSVTM. A helical membrane pass occupies residues 106 to 126; the sequence is LLLPVMTAGWLIIGLFVWILI. Residues 127-128 lie on the Cytoplasmic side of the membrane; sequence PG. The helical transmembrane segment at 129 to 149 threads the bilayer; sequence LNFSASLLISACITATDPILA. The Extracellular portion of the chain corresponds to 150 to 176; it reads QSVVSGKFAQRVPGHLRNLLSAESGCN. The helical transmembrane segment at 177–197 threads the bilayer; it reads DGMAFPFLFLSMNLILHPGNG. At 198 to 203 the chain is on the cytoplasmic side; the sequence is REIVKD. A helical transmembrane segment spans residues 204–224; sequence WICVTILYECLFGCLLGCFIG. Residues 225–244 are Extracellular-facing; the sequence is YVGRITIRFAEKKNIIDRES. A helical membrane pass occupies residues 245-265; the sequence is FLAFYVVLAFMCAGFGSILGV. At 266–294 the chain is on the cytoplasmic side; it reads DDLLVSFAAGATFAWDGWFSQKTQESNVS. The helical transmembrane segment at 295–315 threads the bilayer; it reads TVIDLLLNYAYFIYFGAIIPW. The Extracellular portion of the chain corresponds to 316-319; that stretch reads SQFN. Residues 320 to 340 form a helical membrane-spanning segment; sequence NGEIGTNVWRLIILSIVVIFL. Residues 341-361 lie on the Cytoplasmic side of the membrane; sequence RRIPAVMILRPLIPDIKSWRE. Residues 362 to 382 form a helical membrane-spanning segment; it reads ALFVGHFGPIGVGAIFAAILA. The Extracellular portion of the chain corresponds to 383–410; sequence RGELESTFSDEPTPLNVVPSKEESKHWQ. The chain crosses the membrane as a helical span at residues 411-431; sequence LIACIWPITCFFIVTSIIVHG. The Cytoplasmic portion of the chain corresponds to 432-985; the sequence is SSVAIITLGR…ALSKTLGLNK (554 aa). Disordered stretches follow at residues 489-701 and 726-760; these read MTLS…KPGT and DRNE…GGRL. Polar residues predominate over residues 517–526; the sequence is NNDQIGSVAT. Basic residues predominate over residues 538–558; the sequence is PRRRKLSRKEKRLNRRQKLRN. 2 stretches are compositionally biased toward basic and acidic residues: residues 559-572 and 580-593; these read KGRE…KNEM and DLGR…KEAR. S568 carries the phosphoserine modification. A compositionally biased stretch (low complexity) spans 637–646; it reads SFESSERSSS. Residues 661–675 are compositionally biased toward acidic residues; that stretch reads EETESEIESEDEMEN. Positions 676 to 698 are enriched in basic and acidic residues; it reads ESERSMASSEERRIRKMKEEEMK. The segment covering 743-756 has biased composition (low complexity); sequence SSLTTTMTNLSSSS. A Phosphothreonine modification is found at T765. Residues S768 and S774 each carry the phosphoserine modification. The segment at 812–985 is disordered; the sequence is INPHKSDDDK…ALSKTLGLNK (174 aa). Basic and acidic residues-rich tracts occupy residues 815-828 and 854-863; these read HKSD…RPRN and DEEKAIEGPS. Residues 887–920 show a composition bias toward acidic residues; that stretch reads LDLEDEPSSEEDLGDSYNMDDSEDYDDNAYESET. Positions 970 to 979 are enriched in low complexity; sequence SAAVKSALSK.

The protein belongs to the fungal Na(+)/H(+) exchanger family.

The protein localises to the cell membrane. Functionally, sodium export from cell, takes up external protons in exchange for internal sodium ions. Also capable of exporting potassium ions. This chain is Na(+)/H(+) antiporter (NHA1), found in Saccharomyces cerevisiae (strain ATCC 204508 / S288c) (Baker's yeast).